Consider the following 359-residue polypeptide: Protein LpfD (359 aa).

Residues 1–24 (MLKKLIMFTGLLGGSVLFSGQALA) form the signal peptide.

This sequence belongs to the fimbrial protein family.

The protein localises to the fimbrium. The protein is Protein LpfD (lpfD) of Salmonella typhimurium (strain LT2 / SGSC1412 / ATCC 700720).